A 520-amino-acid chain; its full sequence is Flavin-dependent halogenase radH (520 aa).

Positions 14, 17, and 47 each coordinate FAD. 2 residues coordinate chloride: serine 330 and glycine 331.

The protein belongs to the flavin-dependent halogenase family.

The protein operates within secondary metabolite biosynthesis. In terms of biological role, non-heme halogenase; part of the gene cluster that mediates the biosynthesis of radicicol, a resorcylic acid lactone (RAL) that irreversibly inhibits the HSP90 molecular chaperone, an important target for cancer chemotherapy. The cluster encodes only two apparent post-PKS enzymes, a cytochrome P450 monooxygenase (radP) and a non-heme halogenase (radH) that introduce the epoxide and the chlorine, respectively. If this cluster includes all the genes required for radicicol biosynthesis, the remaining structural features of radicicol are presumably generated by the PKSs rads1 and rads2. The C-2' ketone could arise if the R-PKS rads1 and NR-PKS rads2 each carry out four iterations, in contrast to the five iteration-three iteration split for the hypothemycin PKSs. The origin of the cis 5',6' double bond is not known. The radicicol R-PKS rads1 ER domain may catalyze either double bond isomerization or reduction in the third iteration. The chain is Flavin-dependent halogenase radH from Floropilus chiversii (Chaetomium chiversii).